Consider the following 665-residue polypeptide: MSSQDLYANAATDKPLMQVKGLIREFKAGEQTIRVLHDINLTIHQGEMVAIIGQSGSGKSTLMNILGCLDQATAGDYQVFGQSVNRLAPDELAKLRREHFGFIFQRYHLLGDISARDNVSVPAVYAGMDGQARNERAEQLLSDLGLADKVNNRPSQLSGGQQQRVSIARALMNGGDIILADEPTGALDSKSGKDVVQILKNLNAQGHTIIMVTHDPGLAAQAERVIEIKDGYIIADYKNEDYQRPVAQFSSIIDKHRKSAFGSFIDRLLESFKMSLLAMRAHKMRTLLTMLGIIIGIASVVSVVGLGKGSQEQILSNISSLGTNTITITDGYPYGDPRRQYNDDNLTPQDAQAVADQPYVLSVSPQLNSNMSVRYRNVQEAASISGVGKDYLDVSGETLAMGQGFDEQSILRRTQDIIIDSNAHKTFFPTTANPIGEVLLIGSVPGRVIGVLEPNEGGFSRSVDSPTLYMPYTTMMSRLIGSAYIESFVALIDNNISSSAAESAISNLMKSRHGTDDFRIRNSDSIRQTIESTTAAMTLLISSIAIISLIVGGIGVMNIMLVSVTERTNEIGVRMAVGARQSDIMQQFLIEAVLVCILGGLLGIGMAFAIGELINRVGGDSFKVIYSSTSIIAAFVCSTLIGVVFGFLPARNAAKLDPVEALSRD.

In terms of domain architecture, ABC transporter spans 17–255 (MQVKGLIREF…VAQFSSIIDK (239 aa)). 53–60 (GQSGSGKS) serves as a coordination point for ATP. 4 helical membrane passes run 287–307 (LLTM…VGLG), 544–564 (IAII…LVSV), 588–608 (FLIE…GMAF), and 630–650 (SIIA…FLPA).

It belongs to the ABC transporter superfamily. Macrolide exporter (TC 3.A.1.122) family. Homodimer. Part of the tripartite efflux system MacAB-TolC, which is composed of an inner membrane transporter, MacB, a periplasmic membrane fusion protein, MacA, and an outer membrane component, TolC. The complex forms a large protein conduit and can translocate molecules across both the inner and outer membranes. Interacts with MacA.

It localises to the cell inner membrane. Its function is as follows. Part of the tripartite efflux system MacAB-TolC. MacB is a non-canonical ABC transporter that contains transmembrane domains (TMD), which form a pore in the inner membrane, and an ATP-binding domain (NBD), which is responsible for energy generation. Confers resistance against macrolides. The sequence is that of Macrolide export ATP-binding/permease protein MacB from Psychrobacter arcticus (strain DSM 17307 / VKM B-2377 / 273-4).